The following is a 250-amino-acid chain: Maleate isomerase (250 aa).

Residues Asn-15, 80–82 (CLV), Tyr-137, and Asn-167 contribute to the substrate site. The active-site Nucleophile is the Cys-80. An S-(2-succinyl)cysteine modification is found at Cys-80. Cys-198 acts as the Proton donor in catalysis. A substrate-binding site is contributed by 199–200 (VQ).

It belongs to the maleate isomerase family. Homodimer.

It carries out the reaction maleate = fumarate. The protein operates within cofactor degradation; nicotinate degradation. Its function is as follows. Catalyzes cis-trans isomerization of the C2-C3 double bond in maleate to yield fumarate in the aerobic nicotinate degradation pathway. The polypeptide is Maleate isomerase (Pseudomonas putida (strain ATCC 47054 / DSM 6125 / CFBP 8728 / NCIMB 11950 / KT2440)).